We begin with the raw amino-acid sequence, 493 residues long: Transcript termination protein A18 (493 aa).

Residues 100–256 enclose the Helicase ATP-binding domain; it reads MIELKRPLYI…NSIINIAKLS (157 aa). 113 to 120 provides a ligand contact to ATP; sequence LACGFGKT. The DESH box motif lies at 206 to 209; it reads DESH.

Belongs to the helicase family. Poxviruses subfamily. Interacts with G2. Might be part of a transcription complex composed at least of G2, A18, and H5.

It is found in the virion. DNA helicase which seems to act as a postreplicative transcription termination factor. Involved in ATP-dependent release of nascent RNA. Forms a stable complex with single-stranded DNA, and to a lesser extent RNA. In Cowpox virus (strain GRI-90 / Grishak) (CPV), this protein is Transcript termination protein A18.